A 604-amino-acid chain; its full sequence is 3-hydroxy-3-methylglutaryl-coenzyme A reductase 2 (604 aa).

2 helical membrane passes run 47 to 67 (LPLY…MYFL) and 91 to 111 (AIVS…IGFV). The tract at residues 112–188 (QTFVARGNND…APLVTPAASE (77 aa)) is linker. Asn120 is a glycosylation site (N-linked (GlcNAc...) asparagine). The segment at 189-604 (EDEEIIKSVV…STKDVTKASS (416 aa)) is catalytic. Glu283 acts as the Charge relay system in catalysis. The N-linked (GlcNAc...) asparagine glycan is linked to Asn347. The active-site Charge relay system is the Lys415. Asn460 carries N-linked (GlcNAc...) asparagine glycosylation. Asp491 functions as the Charge relay system in the catalytic mechanism. The Proton donor role is filled by His589. The N-linked (GlcNAc...) asparagine glycan is linked to Asn593.

The protein belongs to the HMG-CoA reductase family.

It is found in the endoplasmic reticulum membrane. The enzyme catalyses (R)-mevalonate + 2 NADP(+) + CoA = (3S)-3-hydroxy-3-methylglutaryl-CoA + 2 NADPH + 2 H(+). It functions in the pathway metabolic intermediate biosynthesis; (R)-mevalonate biosynthesis; (R)-mevalonate from acetyl-CoA: step 3/3. Functionally, catalyzes the synthesis of mevalonate. The specific precursor of all isoprenoid compounds present in plants. The protein is 3-hydroxy-3-methylglutaryl-coenzyme A reductase 2 (HMGR2) of Capsicum annuum (Capsicum pepper).